The following is a 184-amino-acid chain: Ribulose bisphosphate carboxylase small subunit, chloroplastic 2 (184 aa).

The N-terminal 59 residues, 1–59 (MASSMMSNAATAVAVAATSGGAQANMVAPFNGLKSIASFPVTRKSNDITSIASNGGRVQ), are a transit peptide targeting the chloroplast.

Belongs to the RuBisCO small chain family. Heterohexadecamer of 8 large and 8 small subunits.

The protein resides in the plastid. Its subcellular location is the chloroplast. RuBisCO catalyzes two reactions: the carboxylation of D-ribulose 1,5-bisphosphate, the primary event in carbon dioxide fixation, as well as the oxidative fragmentation of the pentose substrate. Both reactions occur simultaneously and in competition at the same active site. Although the small subunit is not catalytic it is essential for maximal activity. The sequence is that of Ribulose bisphosphate carboxylase small subunit, chloroplastic 2 from Amaranthus hypochondriacus (Prince-of-Wales feather).